We begin with the raw amino-acid sequence, 427 residues long: MKTFAQLRLLLAAAALALLSFSAQAQLSIEITGAGASRFPVIIPVFENEASLPRSVSDIVRADLERSGLFSLVDIGPLPLPEGQIPDLGSLRSRGADAALAASVFPQGDGRYEIRFRLFDTQKQTELGALALRMTAAQNRITAHRIADFVYEKLTGLPGYFATRIAYVVKTGPRYELQVADADGMNAQAALVSREPIISPAWSPDGGRLAYVSFEAKKPIIYVHTLATGQRQVVANFKGSNSAPAWSPDGQQLSVVLTKDGLSQLYVLNADGSGVRRLASSSGIDTEPAWSPDGQWIYFTSDRGGSPQIYRIPTAGGAAQRVTFDGTYNVTARPSADGRLLAFITRNNGRFQVAVQDLTTRQTTILTDSARDESPSFAPNGRMILYATDAGGRGVLAAVSSDGRVKQRLSVQAADVREPAWGPLQKQ.

A signal peptide spans 1–25 (MKTFAQLRLLLAAAALALLSFSAQA).

The protein belongs to the TolB family. As to quaternary structure, the Tol-Pal system is composed of five core proteins: the inner membrane proteins TolA, TolQ and TolR, the periplasmic protein TolB and the outer membrane protein Pal. They form a network linking the inner and outer membranes and the peptidoglycan layer.

The protein localises to the periplasm. Its function is as follows. Part of the Tol-Pal system, which plays a role in outer membrane invagination during cell division and is important for maintaining outer membrane integrity. The polypeptide is Tol-Pal system protein TolB (Azoarcus sp. (strain BH72)).